The chain runs to 131 residues: Small ribosomal subunit protein uS8 (131 aa).

This sequence belongs to the universal ribosomal protein uS8 family. Part of the 30S ribosomal subunit. Contacts proteins S5 and S12.

One of the primary rRNA binding proteins, it binds directly to 16S rRNA central domain where it helps coordinate assembly of the platform of the 30S subunit. This Bacteroides fragilis (strain ATCC 25285 / DSM 2151 / CCUG 4856 / JCM 11019 / LMG 10263 / NCTC 9343 / Onslow / VPI 2553 / EN-2) protein is Small ribosomal subunit protein uS8.